The following is a 120-amino-acid chain: Non-specific lipid-transfer protein (120 aa).

The signal sequence occupies residues M1–A26. 4 cysteine pairs are disulfide-bonded: C30–C79, C40–C56, C57–C102, and C77–C116.

It belongs to the plant LTP family. Expressed in protoderm cells of somatic and zygotic embryos, and transiently expressed in epidermal cell layers of leaves, flowers and seeds.

Functionally, plant non-specific lipid-transfer proteins transfer phospholipids as well as galactolipids across membranes. May play a role in wax or cutin deposition in the cell walls of expanding epidermal cells and certain secretory tissues. The polypeptide is Non-specific lipid-transfer protein (EP2) (Daucus carota (Wild carrot)).